We begin with the raw amino-acid sequence, 249 residues long: Adenylate kinase (249 aa).

An ATP-binding site is contributed by 43–48; the sequence is GAGKGT. Residues 63-92 form an NMP region; the sequence is ATGDMLRAQVAAKTALGVEAKKIMDQGGLV. AMP contacts are provided by residues threonine 64, arginine 69, 90–92, 119–122, and glutamine 126; these read GLV and GFPR. The LID stretch occupies residues 160–197; that stretch reads GRLVHPASGRSYHKLFNPPKKNMIDDITGEPLVQRSDD. ATP-binding positions include arginine 161 and 170-171; that span reads SY. Positions 194 and 205 each coordinate AMP. Glutamine 233 contacts ATP.

The protein belongs to the adenylate kinase family. AK2 subfamily. As to quaternary structure, monomer.

The protein localises to the cytoplasm. Its subcellular location is the cytosol. The protein resides in the mitochondrion intermembrane space. It catalyses the reaction AMP + ATP = 2 ADP. In terms of biological role, catalyzes the reversible transfer of the terminal phosphate group between ATP and AMP. Plays an important role in cellular energy homeostasis and in adenine nucleotide metabolism. Adenylate kinase activity is critical for regulation of the phosphate utilization and the AMP de novo biosynthesis pathways. The protein is Adenylate kinase of Scheffersomyces stipitis (strain ATCC 58785 / CBS 6054 / NBRC 10063 / NRRL Y-11545) (Yeast).